Here is a 366-residue protein sequence, read N- to C-terminus: Phosphate acyltransferase (366 aa).

The segment at 334-366 (ESAKNKETQSKQASTKNTAPKTSETTKESQQSL) is disordered. Positions 343–366 (SKQASTKNTAPKTSETTKESQQSL) are enriched in polar residues.

Belongs to the PlsX family. In terms of assembly, homodimer. Probably interacts with PlsY.

The protein localises to the cytoplasm. The enzyme catalyses a fatty acyl-[ACP] + phosphate = an acyl phosphate + holo-[ACP]. It functions in the pathway lipid metabolism; phospholipid metabolism. In terms of biological role, catalyzes the reversible formation of acyl-phosphate (acyl-PO(4)) from acyl-[acyl-carrier-protein] (acyl-ACP). This enzyme utilizes acyl-ACP as fatty acyl donor, but not acyl-CoA. The protein is Phosphate acyltransferase of Onion yellows phytoplasma (strain OY-M).